The following is a 64-amino-acid chain: DNA gyrase inhibitor YacG (64 aa).

Residues C9, C12, C28, and C32 each contribute to the Zn(2+) site.

Belongs to the DNA gyrase inhibitor YacG family. In terms of assembly, interacts with GyrB. The cofactor is Zn(2+).

In terms of biological role, inhibits all the catalytic activities of DNA gyrase by preventing its interaction with DNA. Acts by binding directly to the C-terminal domain of GyrB, which probably disrupts DNA binding by the gyrase. The protein is DNA gyrase inhibitor YacG of Enterobacter sp. (strain 638).